Reading from the N-terminus, the 124-residue chain is Small ribosomal subunit protein uS12 (124 aa).

Asp89 carries the 3-methylthioaspartic acid modification. Residues 104–124 (SAGVQNRNRGRSKYGTKRPKK) are disordered. Positions 111–124 (NRGRSKYGTKRPKK) are enriched in basic residues.

It belongs to the universal ribosomal protein uS12 family. In terms of assembly, part of the 30S ribosomal subunit. Contacts proteins S8 and S17. May interact with IF1 in the 30S initiation complex.

In terms of biological role, with S4 and S5 plays an important role in translational accuracy. Functionally, interacts with and stabilizes bases of the 16S rRNA that are involved in tRNA selection in the A site and with the mRNA backbone. Located at the interface of the 30S and 50S subunits, it traverses the body of the 30S subunit contacting proteins on the other side and probably holding the rRNA structure together. The combined cluster of proteins S8, S12 and S17 appears to hold together the shoulder and platform of the 30S subunit. The sequence is that of Small ribosomal subunit protein uS12 from Pelotomaculum thermopropionicum (strain DSM 13744 / JCM 10971 / SI).